Consider the following 418-residue polypeptide: NADH-quinone oxidoreductase subunit D (418 aa).

Belongs to the complex I 49 kDa subunit family. In terms of assembly, NDH-1 is composed of 14 different subunits. Subunits NuoB, C, D, E, F, and G constitute the peripheral sector of the complex.

It localises to the cell inner membrane. The catalysed reaction is a quinone + NADH + 5 H(+)(in) = a quinol + NAD(+) + 4 H(+)(out). Functionally, NDH-1 shuttles electrons from NADH, via FMN and iron-sulfur (Fe-S) centers, to quinones in the respiratory chain. The immediate electron acceptor for the enzyme in this species is believed to be ubiquinone. Couples the redox reaction to proton translocation (for every two electrons transferred, four hydrogen ions are translocated across the cytoplasmic membrane), and thus conserves the redox energy in a proton gradient. The protein is NADH-quinone oxidoreductase subunit D of Bordetella bronchiseptica (strain ATCC BAA-588 / NCTC 13252 / RB50) (Alcaligenes bronchisepticus).